The primary structure comprises 310 residues: MAALLRLAVLLPLAAPLVATLPTSPVPIAARATPHEPVFFSWDAGAVTSFPIHSSCNATQRRQIEAGLNEAVELARHAKAHILRWGNESEIYRKYFGNRPTMEAVGAYDVIVNGDKANVLFRCDNPDGNCALEGWGGHWRGANATSETVICDRSYTTRRWLVSMCSQGYTVAGSETNTFWASDLMHRLYHVPAVGQGWVDHFADGYDEVIALAKSNGTESTHDSEALQYFALEAYAFDIAAPGVGCAGESHGPDQGHDTGSASAPASTSTSSSSSGSGSGATTTPTDSPSATIDVPSNCHTHEGGQLHCT.

The first 16 residues, 1-16, serve as a signal peptide directing secretion; it reads MAALLRLAVLLPLAAP. Asn-57, Asn-87, Asn-143, and Asn-216 each carry an N-linked (GlcNAc...) asparagine glycan. The segment at 247-310 is disordered; that stretch reads AGESHGPDQG…THEGGQLHCT (64 aa). The segment covering 258 to 292 has biased composition (low complexity); sequence DTGSASAPASTSTSSSSSGSGSGATTTPTDSPSAT. The span at 300 to 310 shows a compositional bias: basic and acidic residues; it reads HTHEGGQLHCT.

The protein belongs to the ZPS1 family.

It localises to the secreted. In Aspergillus fumigatus (strain ATCC MYA-4609 / CBS 101355 / FGSC A1100 / Af293) (Neosartorya fumigata), this protein is Major allergen Asp f 2.